A 1247-amino-acid polypeptide reads, in one-letter code: ABC transporter B family member 14 (1247 aa).

Positions 48-337 constitute an ABC transmembrane type-1 1 domain; the sequence is MFLGGLGTCI…AVPSLSAISK (290 aa). The next 6 helical transmembrane spans lie at 49-69, 95-115, 172-192, 196-216, 277-297, and 315-335; these read FLGG…FVFF, LYLV…VACW, HVLR…LSVW, LLTL…AIVM, LGVG…FWYA, and ILNV…LSAI. Residues Asn-362 and Asn-392 are each glycosylated (N-linked (GlcNAc...) asparagine). In terms of domain architecture, ABC transporter 1 spans 373–608; it reads IEFCGVSFAY…GGDYATLVNC (236 aa). 407–414 lines the ATP pocket; that stretch reads GPSGSGKS. An ABC transmembrane type-1 2 domain is found at 679–971; that stretch reads EWLYALLGSI…TLALTPDIVK (293 aa). Helical transmembrane passes span 680 to 700 and 727 to 747; these read WLYA…PALF and AIIF…QHYF. An N-linked (GlcNAc...) asparagine glycan is attached at Asn-780. A run of 3 helical transmembrane segments spans residues 807-824, 830-850, and 915-935; these read IVQN…AFFY, AVVT…QLFL, and LSQC…SVLI. The N-linked (GlcNAc...) asparagine glycan is linked to Asn-938. Residues 949–969 traverse the membrane as a helical segment; that stretch reads FMVLLVTAYSVAETLALTPDI. Residues 1006–1242 enclose the ABC transporter 2 domain; the sequence is IEFRNVSFAY…SDGFYKKLTS (237 aa). N-linked (GlcNAc...) asparagine glycosylation is present at Asn-1010. ATP is bound at residue 1041–1048; sequence GPSGSGKS. Asn-1108 carries N-linked (GlcNAc...) asparagine glycosylation.

Belongs to the ABC transporter superfamily. ABCB family. Multidrug resistance exporter (TC 3.A.1.201) subfamily.

It is found in the membrane. This chain is ABC transporter B family member 14 (ABCB14), found in Arabidopsis thaliana (Mouse-ear cress).